Here is a 211-residue protein sequence, read N- to C-terminus: Large ribosomal subunit protein uL4 (211 aa).

Residues 41–53 (QAHSRQGTASTLT) are compositionally biased toward polar residues. The interval 41 to 78 (QAHSRQGTASTLTRAEVRGGGRKPYKQKGTGRARQGTI) is disordered. Positions 60 to 71 (GGRKPYKQKGTG) are enriched in basic residues.

It belongs to the universal ribosomal protein uL4 family. Part of the 50S ribosomal subunit.

Its function is as follows. One of the primary rRNA binding proteins, this protein initially binds near the 5'-end of the 23S rRNA. It is important during the early stages of 50S assembly. It makes multiple contacts with different domains of the 23S rRNA in the assembled 50S subunit and ribosome. In terms of biological role, forms part of the polypeptide exit tunnel. The polypeptide is Large ribosomal subunit protein uL4 (Prochlorococcus marinus (strain MIT 9303)).